Consider the following 418-residue polypeptide: Serine hydroxymethyltransferase (418 aa).

Residues Leu121 and 125 to 127 (GHL) contribute to the (6S)-5,6,7,8-tetrahydrofolate site. N6-(pyridoxal phosphate)lysine is present on Lys230. 355–357 (SPF) contacts (6S)-5,6,7,8-tetrahydrofolate.

The protein belongs to the SHMT family. As to quaternary structure, homodimer. Requires pyridoxal 5'-phosphate as cofactor.

The protein localises to the cytoplasm. It catalyses the reaction (6R)-5,10-methylene-5,6,7,8-tetrahydrofolate + glycine + H2O = (6S)-5,6,7,8-tetrahydrofolate + L-serine. The protein operates within one-carbon metabolism; tetrahydrofolate interconversion. It participates in amino-acid biosynthesis; glycine biosynthesis; glycine from L-serine: step 1/1. In terms of biological role, catalyzes the reversible interconversion of serine and glycine with tetrahydrofolate (THF) serving as the one-carbon carrier. This reaction serves as the major source of one-carbon groups required for the biosynthesis of purines, thymidylate, methionine, and other important biomolecules. Also exhibits THF-independent aldolase activity toward beta-hydroxyamino acids, producing glycine and aldehydes, via a retro-aldol mechanism. This Streptococcus pyogenes serotype M3 (strain ATCC BAA-595 / MGAS315) protein is Serine hydroxymethyltransferase.